The following is a 435-amino-acid chain: Elongation factor 1-alpha (435 aa).

Positions 4–229 (KPHLNLIVIG…DMLEIPPKPV (226 aa)) constitute a tr-type G domain. The tract at residues 13-20 (GHVDHGKS) is G1. Residue 13 to 20 (GHVDHGKS) participates in GTP binding. Serine 20 is a Mg(2+) binding site. A G2 region spans residues 69 to 73 (GVTIN). The segment at 90–93 (DAPG) is G3. Residues 90–94 (DAPGH) and 152–155 (TKMD) contribute to the GTP site. A G4 region spans residues 152-155 (TKMD). A G5 region spans residues 193–195 (VSI).

The protein belongs to the TRAFAC class translation factor GTPase superfamily. Classic translation factor GTPase family. EF-Tu/EF-1A subfamily.

The protein localises to the cytoplasm. It catalyses the reaction GTP + H2O = GDP + phosphate + H(+). Its function is as follows. GTP hydrolase that promotes the GTP-dependent binding of aminoacyl-tRNA to the A-site of ribosomes during protein biosynthesis. This Metallosphaera sedula (strain ATCC 51363 / DSM 5348 / JCM 9185 / NBRC 15509 / TH2) protein is Elongation factor 1-alpha.